The chain runs to 308 residues: Zinc transporter ZIP9 (308 aa).

A helical transmembrane segment spans residues 4–24; sequence FLSISLLSVAMLVGCYVAGII. The N-linked (GlcNAc...) asparagine glycan is linked to Asn29. 5 consecutive transmembrane segments (helical) span residues 35-55, 107-127, 147-167, 177-197, and 211-231; these read LKLVTVLGAGLLCGTALAVIV, AYIGVSLVLGFVFMLLVDQIG, ITTTLGLVVHAAADGVALGAA, LIVFVAIMLHKAPAAFGLVSF, and HLLVFALAAPAMSMLTYLGLS. A glycan (N-linked (GlcNAc...) asparagine) is linked at Asn242. The next 2 helical transmembrane spans lie at 245 to 265 and 287 to 307; these read GVAMLFSAGTFLYVATVHVLP and LEVAALVLGCLIPLILSIGHQ.

This sequence belongs to the ZIP transporter (TC 2.A.5) family.

The protein localises to the golgi apparatus. It is found in the trans-Golgi network membrane. The protein resides in the cell membrane. It localises to the cytoplasm. Its subcellular location is the perinuclear region. The protein localises to the mitochondrion. It is found in the nucleus. The catalysed reaction is Zn(2+)(in) = Zn(2+)(out). Transports zinc ions across cell and organelle membranes into the cytoplasm and regulates intracellular zinc homeostasis. Participates in the zinc ions efflux out of the secretory compartments. Regulates intracellular zinc level, resulting in the enhancement of AKT1 and MAPK3/MAPK1 (Erk1/2) phosphorylation in response to the BCR activation. Also functions as a membrane androgen receptor that mediates, through a G protein, the non-classical androgen signaling pathway, characterized by the activation of MAPK3/MAPK1 (Erk1/2) and transcription factors CREB1 or ATF1. This pathway contributes to CLDN1 and CLDN5 expression and tight junction formation between adjacent Sertoli cells. Mediates androgen-induced vascular endothelial cell proliferation through activation of an inhibitory G protein leading to the AKT1 and MAPK3/MAPK1 (Erk1/2) activation which in turn modulate inhibition (phosphorylation) of GSK3B and CCND1 transcription. Moreover, has dual functions as a membrane-bound androgen receptor and as an androgen-dependent zinc transporter both of which are mediated through an inhibitory G protein (Gi) that mediates both MAP kinase and zinc signaling leading to the androgen-dependent apoptotic process. In Mus musculus (Mouse), this protein is Zinc transporter ZIP9.